The following is a 198-amino-acid chain: Succinate dehydrogenase [ubiquinone] cytochrome b subunit, mitochondrial (198 aa).

Residues 1–50 (MSAMMVKLGLNKSALLLKPSAFSRAAALSSSRRLLFNTARTNFLSTSPLK) constitute a mitochondrion transit peptide. The Mitochondrial matrix segment spans residues 51–99 (NVASEMNTKAAIAEEQILNKQRAKRPISPHLTIYQPQLTWYLSSLHRIS). A ubiquinone-binding residues include Ser93 and Arg97. Residues 100–120 (LVLMGLGFYLFTILFGVSGLL) traverse the membrane as a helical segment. At 121 to 139 (GLGLTTEKVSNWYHQKFSK) the chain is on the mitochondrial intermembrane side. A helical transmembrane segment spans residues 140-160 (ITEWSIKGSFAYLFAIHYGGA). His156 is a heme binding site. Residues 161–175 (IRHLIWDTAKELTLK) are Mitochondrial matrix-facing. The helical transmembrane segment at 176-196 (GVYRTGYALIGFTAVLGTYLL) threads the bilayer. At 197–198 (TL) the chain is on the mitochondrial intermembrane side.

It belongs to the cytochrome b560 family. In terms of assembly, forms part of complex II containing four subunits: a flavoprotein (FP), an iron-sulfur protein (IP) and a cytochrome b composed of two integral membrane proteins. The cofactor is heme.

It localises to the mitochondrion inner membrane. It participates in carbohydrate metabolism; tricarboxylic acid cycle. Its function is as follows. Membrane-anchoring mono-heme cytochrome b subunit of succinate dehydrogenase (SDH) that is involved in system II of the mitochondrial electron transport chain and is responsible for transferring electrons from succinate to ubiquinone (coenzyme Q). SDH3 and SDH4 form the membrane dimer that anchors the catalytic dimer formed by SDH1 and SDH2 to the matrix surface of the mitochondrial inner membrane. Electrons originating from the catalytic dimer enter the membrane dimer for ubiquinone reduction. The protein is Succinate dehydrogenase [ubiquinone] cytochrome b subunit, mitochondrial (SDH3) of Saccharomyces cerevisiae (strain ATCC 204508 / S288c) (Baker's yeast).